We begin with the raw amino-acid sequence, 307 residues long: Aspartate carbamoyltransferase catalytic subunit (307 aa).

Residues Arg54 and Thr55 each coordinate carbamoyl phosphate. Lys83 is an L-aspartate binding site. Positions 104, 132, and 135 each coordinate carbamoyl phosphate. Arg165 and Arg228 together coordinate L-aspartate. Positions 267 and 268 each coordinate carbamoyl phosphate.

The protein belongs to the aspartate/ornithine carbamoyltransferase superfamily. ATCase family. Heterododecamer (2C3:3R2) of six catalytic PyrB chains organized as two trimers (C3), and six regulatory PyrI chains organized as three dimers (R2).

The enzyme catalyses carbamoyl phosphate + L-aspartate = N-carbamoyl-L-aspartate + phosphate + H(+). It participates in pyrimidine metabolism; UMP biosynthesis via de novo pathway; (S)-dihydroorotate from bicarbonate: step 2/3. Catalyzes the condensation of carbamoyl phosphate and aspartate to form carbamoyl aspartate and inorganic phosphate, the committed step in the de novo pyrimidine nucleotide biosynthesis pathway. This chain is Aspartate carbamoyltransferase catalytic subunit, found in Clostridium botulinum (strain Okra / Type B1).